The chain runs to 416 residues: CinA-like protein (416 aa).

It belongs to the CinA family.

The protein is CinA-like protein of Nostoc punctiforme (strain ATCC 29133 / PCC 73102).